The sequence spans 431 residues: tRNA (adenine(37)-N6)-methyltransferase (431 aa).

One can recognise a TsaA-like domain in the interval 30–168 (TEPIGYLESC…YIADYDSPQN (139 aa)). S-adenosyl-L-methionine contacts are provided by residues 47-49 (PRQ), 90-91 (HK), arginine 117, leucine 127, and 148-151 (IHGT). 2 disordered regions span residues 167-189 (QNLE…ATAN) and 201-243 (KAQP…DRER). Over residues 207–243 (STKEKPKCREHRTSDENSQKFRDTSEIQHTLPEDRER) the composition is skewed to basic and acidic residues.

This sequence belongs to the tRNA methyltransferase O family.

It catalyses the reaction N(6)-L-threonylcarbamoyladenosine(37) in tRNA + S-adenosyl-L-methionine = N(6)-methyl,N(6)-L-threonylcarbamoyladenosine(37) in tRNA + S-adenosyl-L-homocysteine + H(+). S-adenosyl-L-methionine-dependent methyltransferase responsible for the addition of the methyl group in the formation of N6-methyl-N6-threonylcarbamoyladenosine at position 37 (m(6)t(6)A37) of the tRNA anticodon loop of tRNA(Ser)(GCU). The methyl group of m(6)t(6)A37 may improve the efficiency of the tRNA decoding ability. May bind to tRNA. This is tRNA (adenine(37)-N6)-methyltransferase from Rattus norvegicus (Rat).